The primary structure comprises 104 residues: ATP synthase subunit c (104 aa).

Transmembrane regions (helical) follow at residues 37–57 (LLGA…QGAV) and 83–103 (AGIA…LIFV).

This sequence belongs to the ATPase C chain family. In terms of assembly, F-type ATPases have 2 components, F(1) - the catalytic core - and F(0) - the membrane proton channel. F(1) has five subunits: alpha(3), beta(3), gamma(1), delta(1), epsilon(1). F(0) has three main subunits: a(1), b(2) and c(10-14). The alpha and beta chains form an alternating ring which encloses part of the gamma chain. F(1) is attached to F(0) by a central stalk formed by the gamma and epsilon chains, while a peripheral stalk is formed by the delta and b chains.

It is found in the cell membrane. Its function is as follows. F(1)F(0) ATP synthase produces ATP from ADP in the presence of a proton or sodium gradient. F-type ATPases consist of two structural domains, F(1) containing the extramembraneous catalytic core and F(0) containing the membrane proton channel, linked together by a central stalk and a peripheral stalk. During catalysis, ATP synthesis in the catalytic domain of F(1) is coupled via a rotary mechanism of the central stalk subunits to proton translocation. Functionally, key component of the F(0) channel; it plays a direct role in translocation across the membrane. A homomeric c-ring of between 10-14 subunits forms the central stalk rotor element with the F(1) delta and epsilon subunits. In Mesoplasma florum (strain ATCC 33453 / NBRC 100688 / NCTC 11704 / L1) (Acholeplasma florum), this protein is ATP synthase subunit c.